The sequence spans 1403 residues: Sushi, nidogen and EGF-like domain-containing protein 1 (1403 aa).

Residues 1-24 (MRLGAAWALLLAAALGLGTRGVRA) form the signal peptide. In terms of domain architecture, NIDO spans 103-258 (AFWADVDNRR…GRWAFRIDDA (156 aa)). EGF-like domains are found at residues 268-309 (TTSV…RRCH), 311-347 (DVNECASHPCQNGGTCTHGVNSFSCQCPAGFKGPTCE), and 349-385 (AQSPCDNKVCQNGGQCQAESSSAVCVCQAGYTGATCE). Disulfide bonds link cysteine 272–cysteine 284, cysteine 278–cysteine 297, cysteine 299–cysteine 308, cysteine 315–cysteine 326, cysteine 320–cysteine 335, cysteine 337–cysteine 346, cysteine 353–cysteine 364, cysteine 358–cysteine 373, cysteine 375–cysteine 384, cysteine 391–cysteine 402, cysteine 396–cysteine 411, cysteine 413–cysteine 422, cysteine 433–cysteine 444, cysteine 438–cysteine 453, cysteine 455–cysteine 464, cysteine 472–cysteine 480, cysteine 474–cysteine 488, and cysteine 490–cysteine 499. The N-linked (GlcNAc...) asparagine glycan is linked to asparagine 292. In terms of domain architecture, EGF-like 4; calcium-binding spans 387-423 (DVDECSSDPCQNGGSCVDLVGNYSCICVEPFEGPQCE). N-linked (GlcNAc...) asparagine glycosylation is present at asparagine 408. EGF-like domains are found at residues 429-465 (VPSPCLSNPCQNGGTCVDADEGYVCECPEGFMGLDCR) and 468-500 (ILNDCDCRNGGRCLGANTTLCQCPPGFFGLLCE). A glycan (N-linked (GlcNAc...) asparagine) is linked at asparagine 484. Asparagine 536 is a glycosylation site (N-linked (GlcNAc...) asparagine). EGF-like domains are found at residues 541 to 577 (LPSPCDSDPCFNGGSCDAHEDSYTCECPRGFHGRHCE), 580 to 616 (RPHLCSSGPCRNGGTCKEMGDEYRCTCPYRFTGRHCE), 619 to 655 (KPDSCASGPCHNGGTCFHYIGKYKCDCPPGFSGRHCE), and 657 to 693 (APSPCFRSPCMNGGTCEDLGTDFSCYCQPGYTGHRCQ). Disulfide bonds link cysteine 545/cysteine 556, cysteine 550/cysteine 565, cysteine 567/cysteine 576, cysteine 584/cysteine 595, cysteine 589/cysteine 604, cysteine 606/cysteine 615, cysteine 623/cysteine 634, cysteine 628/cysteine 643, cysteine 645/cysteine 654, cysteine 661/cysteine 672, cysteine 666/cysteine 681, cysteine 683/cysteine 692, cysteine 698/cysteine 739, cysteine 724/cysteine 751, cysteine 757/cysteine 768, cysteine 762/cysteine 777, cysteine 779/cysteine 788, cysteine 795/cysteine 806, cysteine 800/cysteine 815, cysteine 817/cysteine 826, cysteine 833/cysteine 844, cysteine 838/cysteine 853, cysteine 855/cysteine 864, cysteine 871/cysteine 882, cysteine 876/cysteine 891, and cysteine 893/cysteine 902. One can recognise a Sushi domain in the interval 696–753 (VDCGHPEEVEHATMRFNGTHVGSVALYTCEPGFSLSALSHIRVCQPQGVWSQPPQCIE). Asparagine 712 carries an N-linked (GlcNAc...) asparagine glycan. The 37-residue stretch at 753–789 (EVDECRSQPCLHGGSCQDLIADYQCLCSPGYEGVHCE) folds into the EGF-like 11; calcium-binding domain. The 37-residue stretch at 791–827 (ETDECQAQPCRNGGSCRDLPRAFICQCPEGFVGIHCE) folds into the EGF-like 12; calcium-binding domain. EGF-like domains are found at residues 829–865 (EVDACASSPCQHGGRCEDGGGAYLCVCPEGFFGYNCE) and 867–903 (VSDPCFSSPCGSRGYCLASNGSHSCTCKVGYTGKDCT). N-linked (GlcNAc...) asparagine glycosylation occurs at asparagine 886. Fibronectin type-III domains are found at residues 908-1006 (PPTA…TRPR), 1007-1105 (PIED…TRPL), and 1106-1200 (PPAN…SPRD). N-linked (GlcNAc...) asparagine glycosylation is found at asparagine 977, asparagine 1015, asparagine 1109, asparagine 1139, and asparagine 1298. In terms of domain architecture, EGF-like 15 spans 1306 to 1342 (TPGSCSEDACQNGGTCVPGADAHSCDCRPGFKGRHCE). 3 cysteine pairs are disulfide-bonded: cysteine 1310-cysteine 1321, cysteine 1315-cysteine 1330, and cysteine 1332-cysteine 1341.

Phosphorylated on serine and threonine residues. Post-translationally, N-glycosylated. As to expression, expressed in lung.

The protein localises to the secreted. Its subcellular location is the extracellular space. The protein resides in the extracellular matrix. This chain is Sushi, nidogen and EGF-like domain-containing protein 1, found in Mus musculus (Mouse).